The following is a 557-amino-acid chain: Small ribosomal subunit protein bS1 (557 aa).

S1 motif domains follow at residues 21–87, 105–171, 192–260, and 277–347; these read GSIV…LSRE, AETV…VSRR, GMEV…LGLK, and GTKL…LGLK. N6-acetyllysine is present on residues K229, K279, and K363. 2 consecutive S1 motif domains span residues 364-434 and 451-520; these read GDRV…LGVK and GAIV…LSVR.

The protein belongs to the bacterial ribosomal protein bS1 family. In terms of assembly, part of the 30S ribosomal subunit. Some nascent polypeptide chains are able to cross-link to this protein in situ. Can be cross-linked to mRNA in the ribosome. In terms of processing, phosphorylated; probably on a serine.

In terms of biological role, required for translation of most natural mRNAs except for leaderless mRNA. Binds mRNA upstream of the Shine-Dalgarno (SD) sequence and helps it bind to the 30S ribosomal subunit; acts as an RNA chaperone to unfold structured mRNA on the ribosome but is not essential for mRNAs with strong SDs and little 5'-UTR structure, thus it may help fine-tune which mRNAs that are translated. Unwinds dsRNA by binding to transiently formed ssRNA regions; binds about 10 nucleotides. Has a preference for polypyrimidine tracts. Negatively autoregulates its own translation. The sequence is that of Small ribosomal subunit protein bS1 (rpsA) from Escherichia coli O157:H7.